The sequence spans 529 residues: Kunitz-type protease inhibitor 1 (529 aa).

The N-terminal stretch at 1–35 (MAPARTMARARLAPAGIPAVALWLLCTLGLQGTQA) is a signal peptide. Residues 57–140 (GVPGFVLDTN…FAPREGFINY (84 aa)) enclose the MANSC domain. N-linked (GlcNAc...) asparagine glycosylation is found at asparagine 66 and asparagine 235. The region spanning 250–300 (CLASNKVGRCRGSFPRWYYDPTEQICKSFVYGGCLGNKNNYLREEECILAC) is the BPTI/Kunitz inhibitor 1 domain. 9 cysteine pairs are disulfide-bonded: cysteine 250/cysteine 300, cysteine 259/cysteine 283, cysteine 275/cysteine 296, cysteine 335/cysteine 347, cysteine 342/cysteine 360, cysteine 354/cysteine 369, cysteine 391/cysteine 441, cysteine 400/cysteine 424, and cysteine 416/cysteine 437. Residues 334–370 (TCQPTQFRCSNGCCIDSFLECDDTPNCPDASDEAACE) enclose the LDL-receptor class A domain. Positions 391–441 (CVDLPDTGLCKESIPRWYYNPFSEHCARFTYGGCYGNKNNFEEEQQCLESC) constitute a BPTI/Kunitz inhibitor 2 domain. Asparagine 523 carries an N-linked (GlcNAc...) asparagine glycan.

Interacts with HGFAC. Interacts with TMPRSS13; the interaction promotes the phosphorylation and cell membrane localization of TMPRSS13.

It localises to the secreted. The protein localises to the cytoplasm. Its subcellular location is the cell membrane. Functionally, inhibitor of HGFAC. Inhibits serine protease activity of ST14/matriptase in vitro. Inhibits serine protease activity of TMPRSS13, via the BPTI/Kunitz inhibitor 1 domain. This Homo sapiens (Human) protein is Kunitz-type protease inhibitor 1 (SPINT1).